A 365-amino-acid polypeptide reads, in one-letter code: GTPase Obg (365 aa).

The region spanning 1–159 (MKFIDEARIE…RMLKLELKVL (159 aa)) is the Obg domain. Positions 160–334 (ADVGLLGMPN…LIYAIKDHLQ (175 aa)) constitute an OBG-type G domain. GTP contacts are provided by residues 166–173 (GMPNAGKS), 191–195 (FTTLH), 213–216 (DIPG), 284–287 (NKLD), and 315–317 (SAL). Mg(2+)-binding residues include S173 and T193.

This sequence belongs to the TRAFAC class OBG-HflX-like GTPase superfamily. OBG GTPase family. Monomer. It depends on Mg(2+) as a cofactor.

Its subcellular location is the cytoplasm. Its function is as follows. An essential GTPase which binds GTP, GDP and possibly (p)ppGpp with moderate affinity, with high nucleotide exchange rates and a fairly low GTP hydrolysis rate. Plays a role in control of the cell cycle, stress response, ribosome biogenesis and in those bacteria that undergo differentiation, in morphogenesis control. This chain is GTPase Obg, found in Cupriavidus necator (strain ATCC 17699 / DSM 428 / KCTC 22496 / NCIMB 10442 / H16 / Stanier 337) (Ralstonia eutropha).